The following is a 152-amino-acid chain: Ribonuclease H (152 aa).

Positions 1 to 142 constitute an RNase H type-1 domain; that stretch reads MNSKVVIYTD…ADKLAVQGRE (142 aa). Mg(2+) contacts are provided by Asp-10, Glu-48, Asp-70, and Asp-134.

Belongs to the RNase H family. As to quaternary structure, monomer. The cofactor is Mg(2+).

The protein resides in the cytoplasm. The catalysed reaction is Endonucleolytic cleavage to 5'-phosphomonoester.. In terms of biological role, endonuclease that specifically degrades the RNA of RNA-DNA hybrids. The chain is Ribonuclease H from Rickettsia akari (strain Hartford).